The following is a 388-amino-acid chain: Ferrochelatase (388 aa).

Residues H196 and E277 each contribute to the Fe cation site.

Belongs to the ferrochelatase family.

It localises to the cytoplasm. It catalyses the reaction heme b + 2 H(+) = protoporphyrin IX + Fe(2+). It participates in porphyrin-containing compound metabolism; protoheme biosynthesis; protoheme from protoporphyrin-IX: step 1/1. Its function is as follows. Catalyzes the ferrous insertion into protoporphyrin IX. The polypeptide is Ferrochelatase (Nostoc punctiforme (strain ATCC 29133 / PCC 73102)).